A 472-amino-acid polypeptide reads, in one-letter code: Zinc finger imprinted 3 (472 aa).

A KRAB domain is found at 8-80 (VTFEDVTVNF…EEEVLGSGRA (73 aa)). 11 consecutive C2H2-type zinc fingers follow at residues 167–189 (LKCNACRKLFSSKSRLQSHLRRH), 195–217 (FECHSCGRAFGEKWKLDKHQKTH), 223–245 (YKCENCGNAYKQKSNLFQHQKMH), 251–273 (YQCKTCGKAFSWKSSCINHEKIH), 279–301 (YQCNECEKSFRQNSTLIQHKKVH), 307–329 (FQCTDCGKAFIYKSDLVKHQRIH), 335–357 (YKCSICEKAFSQKSNVIDHEKIH), 363–385 (YECDLCGNTFIQKKNLIQHKKIH), 391–413 (YECNRCGKAFFQKSNLHSHQKTH), 419–441 (YRCSECGKTFIRKLNLSLHKKTH), and 447–470 (YGCSECGKAFADRSYLVRHQKRIH).

Belongs to the krueppel C2H2-type zinc-finger protein family.

It localises to the nucleus. May be involved in transcriptional regulation. The protein is Zinc finger imprinted 3 (ZIM3) of Homo sapiens (Human).